Here is a 439-residue protein sequence, read N- to C-terminus: 5-methylthioadenosine/S-adenosylhomocysteine deaminase (439 aa).

Residues H70 and H72 each contribute to the Zn(2+) site. Substrate contacts are provided by E99 and H192. H219 provides a ligand contact to Zn(2+). Substrate-binding residues include E222 and D307. D307 contacts Zn(2+).

Belongs to the metallo-dependent hydrolases superfamily. MTA/SAH deaminase family. Zn(2+) serves as cofactor.

It catalyses the reaction S-adenosyl-L-homocysteine + H2O + H(+) = S-inosyl-L-homocysteine + NH4(+). It carries out the reaction S-methyl-5'-thioadenosine + H2O + H(+) = S-methyl-5'-thioinosine + NH4(+). Functionally, catalyzes the deamination of 5-methylthioadenosine and S-adenosyl-L-homocysteine into 5-methylthioinosine and S-inosyl-L-homocysteine, respectively. Is also able to deaminate adenosine. This is 5-methylthioadenosine/S-adenosylhomocysteine deaminase from Thermodesulfovibrio yellowstonii (strain ATCC 51303 / DSM 11347 / YP87).